The sequence spans 187 residues: Large ribosomal subunit protein uL5 (187 aa).

The protein belongs to the universal ribosomal protein uL5 family. Part of the 50S ribosomal subunit; part of the 5S rRNA/L5/L18/L25 subcomplex. Contacts the 5S rRNA and the P site tRNA. Forms a bridge to the 30S subunit in the 70S ribosome.

Its function is as follows. This is one of the proteins that bind and probably mediate the attachment of the 5S RNA into the large ribosomal subunit, where it forms part of the central protuberance. In the 70S ribosome it contacts protein S13 of the 30S subunit (bridge B1b), connecting the 2 subunits; this bridge is implicated in subunit movement. Contacts the P site tRNA; the 5S rRNA and some of its associated proteins might help stabilize positioning of ribosome-bound tRNAs. This Mycolicibacterium paratuberculosis (strain ATCC BAA-968 / K-10) (Mycobacterium paratuberculosis) protein is Large ribosomal subunit protein uL5.